Here is a 148-residue protein sequence, read N- to C-terminus: Endoribonuclease YbeY (148 aa).

Zn(2+) is bound by residues His-113, His-117, and His-123.

Belongs to the endoribonuclease YbeY family. The cofactor is Zn(2+).

The protein resides in the cytoplasm. Single strand-specific metallo-endoribonuclease involved in late-stage 70S ribosome quality control and in maturation of the 3' terminus of the 16S rRNA. The sequence is that of Endoribonuclease YbeY from Borrelia recurrentis (strain A1).